The following is a 343-amino-acid chain: D-alanine--D-alanine ligase (343 aa).

Residues 132 to 337 (KNLFSYHKIP…YPDLIDKLIE (206 aa)) form the ATP-grasp domain. 165–220 (DRFLGWPCFVKPANMGSSIGVSKVHSPGEVKKALEKGFYYDRKLIFEEFVEGREIE) serves as a coordination point for ATP. Residues Asp-291, Glu-304, and Asn-306 each coordinate Mg(2+).

It belongs to the D-alanine--D-alanine ligase family. It depends on Mg(2+) as a cofactor. The cofactor is Mn(2+).

It localises to the cytoplasm. The catalysed reaction is 2 D-alanine + ATP = D-alanyl-D-alanine + ADP + phosphate + H(+). It participates in cell wall biogenesis; peptidoglycan biosynthesis. In terms of biological role, cell wall formation. This is D-alanine--D-alanine ligase from Halothermothrix orenii (strain H 168 / OCM 544 / DSM 9562).